A 234-amino-acid polypeptide reads, in one-letter code: Ubiquitin domain-containing protein 1 (234 aa).

A disordered region spans residues Met1 to Asp47. A compositionally biased stretch (polar residues) spans Ser12–Gly21. The span at Leu32–Ser41 shows a compositional bias: basic and acidic residues. Positions Cys152–Pro227 constitute a Ubiquitin-like domain.

In terms of biological role, may be involved in the regulation of cellular senescence through a positive feedback loop with TP53. The chain is Ubiquitin domain-containing protein 1 (ubtd1) from Xenopus laevis (African clawed frog).